Here is a 267-residue protein sequence, read N- to C-terminus: V-type proton ATPase subunit D (267 aa).

Belongs to the V-ATPase D subunit family. As to quaternary structure, V-ATPase is a heteromultimeric enzyme composed of a peripheral catalytic V1 complex (components A to H) attached to an integral membrane V0 proton pore complex (components: a, c, c', c'', d, e, f and VOA1).

It is found in the vacuole membrane. Subunit of the V1 complex of vacuolar(H+)-ATPase (V-ATPase), a multisubunit enzyme composed of a peripheral complex (V1) that hydrolyzes ATP and a membrane integral complex (V0) that translocates protons. V-ATPase is responsible for acidifying and maintaining the pH of intracellular compartments. This Candida albicans (strain SC5314 / ATCC MYA-2876) (Yeast) protein is V-type proton ATPase subunit D (VMA8).